Consider the following 354-residue polypeptide: Glucose 1-dehydrogenase (354 aa).

Residues 1–27 (MKVIGVTRDDDGPQLLERERPSPDPGE) form a disordered region. Residues 7–22 (TRDDDGPQLLERERPS) are compositionally biased toward basic and acidic residues. D38 contacts Zn(2+). T40 is a binding site for substrate. H63 and E64 together coordinate Zn(2+). The segment at 91 to 110 (PNGETNEYFRRGEPDMAPDG) is disordered. Substrate-binding residues include E114 and E150. E150 contributes to the Zn(2+) binding site. Residues 181 to 184 (NGSL), 204 to 205 (RR), 269 to 271 (LGI), and 298 to 300 (TVN) each bind NADP(+). Residue N300 coordinates substrate.

It belongs to the zinc-containing alcohol dehydrogenase family. Glucose 1-dehydrogenase subfamily. It depends on Zn(2+) as a cofactor.

The catalysed reaction is D-glucose + NAD(+) = D-glucono-1,5-lactone + NADH + H(+). It carries out the reaction D-glucose + NADP(+) = D-glucono-1,5-lactone + NADPH + H(+). Functionally, catalyzes the NAD(P)(+)-dependent oxidation of D-glucose to D-gluconate via gluconolactone. Can utilize both NAD(+) and NADP(+) as electron acceptor. Is involved in the degradation of glucose through a modified Entner-Doudoroff pathway. This Haloarcula marismortui (strain ATCC 43049 / DSM 3752 / JCM 8966 / VKM B-1809) (Halobacterium marismortui) protein is Glucose 1-dehydrogenase.